Reading from the N-terminus, the 715-residue chain is Polyphosphate kinase (715 aa).

Asn60 is an ATP binding site. Positions 380 and 410 each coordinate Mg(2+). Catalysis depends on His440, which acts as the Phosphohistidine intermediate. ATP is bound by residues Tyr473, Arg569, and His597.

The protein belongs to the polyphosphate kinase 1 (PPK1) family. Mg(2+) serves as cofactor. In terms of processing, an intermediate of this reaction is the autophosphorylated ppk in which a phosphate is covalently linked to a histidine residue through a N-P bond.

The catalysed reaction is [phosphate](n) + ATP = [phosphate](n+1) + ADP. In terms of biological role, catalyzes the reversible transfer of the terminal phosphate of ATP to form a long-chain polyphosphate (polyP). In Erythrobacter litoralis (strain HTCC2594), this protein is Polyphosphate kinase.